The primary structure comprises 317 residues: Coproporphyrinogen-III oxidase, aerobic 1 (317 aa).

Residues 38-47 (VLRDGAIFEQ) are important for dimerization. Serine 82 lines the substrate pocket. The active-site Proton donor is the histidine 96. Substrate contacts are provided by residues 98-100 (NYR) and 269-274 (NGRTES). The interval 251–286 (YVEFNLVYDRGTIFGLQTNGRTESILMSLPPLVRWE) is important for dimerization.

Belongs to the aerobic coproporphyrinogen-III oxidase family. As to quaternary structure, homodimer.

The protein resides in the cytoplasm. The enzyme catalyses coproporphyrinogen III + O2 + 2 H(+) = protoporphyrinogen IX + 2 CO2 + 2 H2O. Its pathway is porphyrin-containing compound metabolism; protoporphyrin-IX biosynthesis; protoporphyrinogen-IX from coproporphyrinogen-III (O2 route): step 1/1. In terms of biological role, key enzyme in heme biosynthesis. Catalyzes the oxidative decarboxylation of propionic acid side chains of rings A and B of coproporphyrinogen III. In Nostoc sp. (strain PCC 7120 / SAG 25.82 / UTEX 2576), this protein is Coproporphyrinogen-III oxidase, aerobic 1.